A 308-amino-acid chain; its full sequence is Putative S-adenosyl-L-methionine-dependent methyltransferase Mb3816c (308 aa).

Residues Asp-131 and 160–161 (DL) each bind S-adenosyl-L-methionine.

This sequence belongs to the UPF0677 family.

Its function is as follows. Exhibits S-adenosyl-L-methionine-dependent methyltransferase activity. The polypeptide is Putative S-adenosyl-L-methionine-dependent methyltransferase Mb3816c (Mycobacterium bovis (strain ATCC BAA-935 / AF2122/97)).